Consider the following 104-residue polypeptide: UPF0235 protein Paes_1868 (104 aa).

It belongs to the UPF0235 family.

The sequence is that of UPF0235 protein Paes_1868 from Prosthecochloris aestuarii (strain DSM 271 / SK 413).